The following is a 507-amino-acid chain: uncharacterized protein (507 aa).

Disordered regions lie at residues 91–162 (NEKT…KKLL), 174–255 (EKLQ…QQQQ), and 309–422 (KRKL…NYST). Acidic residues predominate over residues 116–143 (DSSESDSSESESDSSESESESESNETSE). Over residues 144 to 155 (NESSSSSEPESS) the composition is skewed to low complexity. The span at 174–193 (EKLQQEQQKQKEAQKPKEKP) shows a compositional bias: basic and acidic residues. 3 stretches are compositionally biased toward low complexity: residues 194–236 (QQQQ…QQIE), 243–255 (PQQQ…QQQQ), and 313–350 (QSQL…TNKP). A compositionally biased stretch (basic residues) spans 351–360 (LSKRQKKLLK). The segment covering 378 to 409 (NNKNDNSTNDSNNNNDNNNNNKNDTNDSNNDD) has biased composition (low complexity).

This is an uncharacterized protein from Dictyostelium discoideum (Social amoeba).